The following is a 95-amino-acid chain: Aspartyl/glutamyl-tRNA(Asn/Gln) amidotransferase subunit C (95 aa).

It belongs to the GatC family. In terms of assembly, heterotrimer of A, B and C subunits.

The catalysed reaction is L-glutamyl-tRNA(Gln) + L-glutamine + ATP + H2O = L-glutaminyl-tRNA(Gln) + L-glutamate + ADP + phosphate + H(+). The enzyme catalyses L-aspartyl-tRNA(Asn) + L-glutamine + ATP + H2O = L-asparaginyl-tRNA(Asn) + L-glutamate + ADP + phosphate + 2 H(+). Functionally, allows the formation of correctly charged Asn-tRNA(Asn) or Gln-tRNA(Gln) through the transamidation of misacylated Asp-tRNA(Asn) or Glu-tRNA(Gln) in organisms which lack either or both of asparaginyl-tRNA or glutaminyl-tRNA synthetases. The reaction takes place in the presence of glutamine and ATP through an activated phospho-Asp-tRNA(Asn) or phospho-Glu-tRNA(Gln). In Brucella abortus (strain S19), this protein is Aspartyl/glutamyl-tRNA(Asn/Gln) amidotransferase subunit C.